The chain runs to 361 residues: Trans-enoyl reductase gkaC (361 aa).

Residues 15-357 (EDVGSFEISR…RREISGKKMV (343 aa)) form the Enoyl reductase (ER) domain. Residues 48–51 (CDWK), 172–175 (SSAS), 195–198 (SPKN), Y213, 260–261 (FE), and 351–352 (IS) contribute to the NADP(+) site.

This sequence belongs to the zinc-containing alcohol dehydrogenase family. Monomer.

Its pathway is mycotoxin biosynthesis. In terms of biological role, trans-enoyl reductasee; part of the gene cluster that mediates the biosynthesis of GKK1032, fungal natural products containing a macrocyclic para-cyclophane connected to a decahydrofluorene ring system that show potent antitumor activities. Within the pathway, the PKS-NRPS gkaA, with the help of the trans-enoyl reductase gkaC, synthesize the polyketide-tyrosyl acyl thioester product which can be reductively off-loaded by the terminal reductase (R) domain in gkaA. The PKS module of gkaA acts in combination with the trans-acting enoyl reductase gkaC to produce a methylated polyketide attached to the ACP domain. In parallel, the adenylation (A) domain of the NRPS module activated L-tyrosine, which is then transferred to the ACP domain. The condensation (C) domain subsequently links this group to the polyketide chain, forming an enzyme-bound amide. The alpha/beta hydrolase gkaG is then required to catalyze the subsequent Knoevenagel condensation that affords the 3-pyrrolin-2-one ring, whereas the three proteins gkaB, gkadX and gkaZ then function synergistically to form the cyclophane. This chain is Trans-enoyl reductase gkaC, found in Penicillium citrinum.